Here is a 164-residue protein sequence, read N- to C-terminus: uncharacterized protein (164 aa).

Positions 1–18 are cleaved as a signal peptide; sequence MILILTIIVGFLIYFVTA. An N-linked (GlcNAc...) asparagine; by host glycan is attached at N88.

Belongs to the IIV-6 357R family.

This is an uncharacterized protein from Acheta domesticus (House cricket).